We begin with the raw amino-acid sequence, 234 residues long: Zinc finger BED domain-containing protein 3 (234 aa).

The segment at 19 to 42 is disordered; the sequence is AAARGGQCPGLGPAPTPTPPGRLG. The BED-type zinc finger occupies 43–104; that stretch reads APYSEAWGYF…SAHRRELESS (62 aa). Zn(2+) contacts are provided by Cys69, Cys72, His92, and His97. Disordered stretches follow at residues 94 to 126 and 202 to 225; these read RSAH…AAPE and REGA…GDRD. Pro residues predominate over residues 111-122; the sequence is PAAPCPPPPGPA. The span at 216–225 shows a compositional bias: basic and acidic residues; the sequence is LKDDPEGDRD.

Associates with the subcortical maternal complex (SCMC) composed of at least NLRP5, KHDC3L, OOEP, and TLE6 via interaction with NLRP5 and TLE6. Interacts with AXIN1; the interaction is direct, enhanced by protein kinase GSK3B and casein kinase CSNK1E activities and decreases GSK3B-induced beta-catenin serine and threonine phosphorylations. In terms of tissue distribution, secreted in blood plasma, and expressed in skeletal muscle and adipose tissue (at protein level).

Its subcellular location is the cytoplasm. The protein localises to the membrane. It localises to the secreted. In terms of biological role, acts as a positive regulator in the activation of the canonical Wnt/beta-catenin signaling pathway by stabilizing cytoplasmic beta-catenin. Involved in transcription activation of Wnt target gene expression. Plays a role in symmetric division of blastomeres in the early stages of embryogenesis via regulation of mitotic spindle central positioning and organization of the F-actin filament network. Plays a role in regulating the distribution of cellular organelles, via modulation of cytoskeletal dynamics and cytoplasmic lattice formation. The chain is Zinc finger BED domain-containing protein 3 (ZBED3) from Homo sapiens (Human).